The sequence spans 60 residues: Large ribosomal subunit protein uL30 (60 aa).

It belongs to the universal ribosomal protein uL30 family. Part of the 50S ribosomal subunit.

The sequence is that of Large ribosomal subunit protein uL30 from Streptococcus suis (strain 98HAH33).